Reading from the N-terminus, the 251-residue chain is Mediator of RNA polymerase II transcription subunit 7 (251 aa).

Positions 1–38 (MLPGFGAQTVSPFPNPPEYASAYTSDRINNGSAPPPPH) are disordered. Positions 22 to 32 (AYTSDRINNGS) are enriched in polar residues.

The protein belongs to the Mediator complex subunit 7 family. Component of the Mediator complex. Interacts with mdt-10 and mdt-21. Interacts with RNA polymerase II.

The protein resides in the nucleus. Component of the Mediator complex, a coactivator involved in the regulated transcription of nearly all RNA polymerase II-dependent genes. Mediator functions as a bridge to convey information from gene-specific regulatory proteins to the basal RNA polymerase II transcription machinery. Mediator is recruited to promoters by direct interactions with regulatory proteins and serves as a scaffold for the assembly of a functional preinitiation complex with RNA polymerase II and the general transcription factors. Required for germ cell development and gonadal growth. This Caenorhabditis elegans protein is Mediator of RNA polymerase II transcription subunit 7 (let-49).